The sequence spans 447 residues: Adenylosuccinate synthetase (447 aa).

Residues 12–18 and 40–42 contribute to the GTP site; these read GDEGKGK and GHT. The active-site Proton acceptor is the D13. 2 residues coordinate Mg(2+): D13 and G40. Residues 13 to 16, 38 to 41, T128, R142, Q223, T238, and R302 contribute to the IMP site; these read DEGK and NAGH. H41 functions as the Proton donor in the catalytic mechanism. 298 to 304 contacts substrate; the sequence is TTTGRKR. Residues R304, 330–332, and 412–414 each bind GTP; these read KLD and SLG.

Belongs to the adenylosuccinate synthetase family. Homodimer. The cofactor is Mg(2+).

Its subcellular location is the cytoplasm. It carries out the reaction IMP + L-aspartate + GTP = N(6)-(1,2-dicarboxyethyl)-AMP + GDP + phosphate + 2 H(+). It participates in purine metabolism; AMP biosynthesis via de novo pathway; AMP from IMP: step 1/2. Plays an important role in the de novo pathway of purine nucleotide biosynthesis. Catalyzes the first committed step in the biosynthesis of AMP from IMP. This is Adenylosuccinate synthetase from Nostoc punctiforme (strain ATCC 29133 / PCC 73102).